The sequence spans 287 residues: Hypersensitive-induced response protein-like protein 2 (287 aa).

Residue Gly-2 is the site of N-myristoyl glycine attachment.

Its function is as follows. Positive regulator of hypersensitive response (HR)-like cell death. May be involved in potassium ion channel regulation. In Oryza sativa subsp. japonica (Rice), this protein is Hypersensitive-induced response protein-like protein 2 (HIRL2).